The sequence spans 243 residues: 1-(5-phosphoribosyl)-5-[(5-phosphoribosylamino)methylideneamino] imidazole-4-carboxamide isomerase (243 aa).

Catalysis depends on D8, which acts as the Proton acceptor. D128 serves as the catalytic Proton donor.

It belongs to the HisA/HisF family.

Its subcellular location is the cytoplasm. It carries out the reaction 1-(5-phospho-beta-D-ribosyl)-5-[(5-phospho-beta-D-ribosylamino)methylideneamino]imidazole-4-carboxamide = 5-[(5-phospho-1-deoxy-D-ribulos-1-ylimino)methylamino]-1-(5-phospho-beta-D-ribosyl)imidazole-4-carboxamide. It participates in amino-acid biosynthesis; L-histidine biosynthesis; L-histidine from 5-phospho-alpha-D-ribose 1-diphosphate: step 4/9. This Opitutus terrae (strain DSM 11246 / JCM 15787 / PB90-1) protein is 1-(5-phosphoribosyl)-5-[(5-phosphoribosylamino)methylideneamino] imidazole-4-carboxamide isomerase.